Here is a 371-residue protein sequence, read N- to C-terminus: Phospho-N-acetylmuramoyl-pentapeptide-transferase (371 aa).

The next 10 helical transmembrane spans lie at 25–45 (YLTF…VAMG), 79–99 (TMGG…FADL), 104–124 (VWVV…DDYA), 139–159 (KLIA…IFAP), 179–199 (LVIN…AGFS), 210–230 (GLAI…AYLV), 247–267 (VGEL…FLWY), 274–294 (IFMG…IAVC), 299–319 (LVLG…MIQV), and 348–368 (TVVI…LATL).

The protein belongs to the glycosyltransferase 4 family. MraY subfamily. Requires Mg(2+) as cofactor.

It localises to the cell inner membrane. The catalysed reaction is UDP-N-acetyl-alpha-D-muramoyl-L-alanyl-gamma-D-glutamyl-meso-2,6-diaminopimeloyl-D-alanyl-D-alanine + di-trans,octa-cis-undecaprenyl phosphate = di-trans,octa-cis-undecaprenyl diphospho-N-acetyl-alpha-D-muramoyl-L-alanyl-D-glutamyl-meso-2,6-diaminopimeloyl-D-alanyl-D-alanine + UMP. It participates in cell wall biogenesis; peptidoglycan biosynthesis. Catalyzes the initial step of the lipid cycle reactions in the biosynthesis of the cell wall peptidoglycan: transfers peptidoglycan precursor phospho-MurNAc-pentapeptide from UDP-MurNAc-pentapeptide onto the lipid carrier undecaprenyl phosphate, yielding undecaprenyl-pyrophosphoryl-MurNAc-pentapeptide, known as lipid I. In Caulobacter sp. (strain K31), this protein is Phospho-N-acetylmuramoyl-pentapeptide-transferase.